Consider the following 928-residue polypeptide: Outer membrane protein SlpA (928 aa).

The N-terminal stretch at 1 to 23 is a signal peptide; the sequence is MKKRLVTLLAGLLTVLSMGFGLA. An SLH domain is found at 24-84; the sequence is QFSDVPAGHW…QQIEEELKTQ (61 aa).

Homotrimer.

It localises to the cell outer membrane. Its function is as follows. Plays an important role in the structural organization and integrity of the cell envelope, bridging the outer membrane to the peptidoglyan layer. Appears to be a nonselective channel. This Thermus thermophilus (strain ATCC 27634 / DSM 579 / HB8) protein is Outer membrane protein SlpA (slpA).